A 251-amino-acid polypeptide reads, in one-letter code: Hydroxyacylglutathione hydrolase (251 aa).

Zn(2+) contacts are provided by His53, His55, Asp57, His58, His110, Asp127, and His165.

The protein belongs to the metallo-beta-lactamase superfamily. Glyoxalase II family. As to quaternary structure, monomer. The cofactor is Zn(2+).

The catalysed reaction is an S-(2-hydroxyacyl)glutathione + H2O = a 2-hydroxy carboxylate + glutathione + H(+). Its pathway is secondary metabolite metabolism; methylglyoxal degradation; (R)-lactate from methylglyoxal: step 2/2. Functionally, thiolesterase that catalyzes the hydrolysis of S-D-lactoyl-glutathione to form glutathione and D-lactic acid. The chain is Hydroxyacylglutathione hydrolase from Salmonella paratyphi C (strain RKS4594).